The primary structure comprises 427 residues: 3-phosphoshikimate 1-carboxyvinyltransferase (427 aa).

3-phosphoshikimate-binding residues include Lys-22, Ser-23, and Arg-27. Position 22 (Lys-22) interacts with phosphoenolpyruvate. Positions 96 and 124 each coordinate phosphoenolpyruvate. Residues Ser-169, Ser-170, Gln-171, Ser-197, Asp-313, Asn-336, and Lys-340 each contribute to the 3-phosphoshikimate site. Gln-171 lines the phosphoenolpyruvate pocket. Catalysis depends on Asp-313, which acts as the Proton acceptor. Residues Arg-344, Arg-386, and Lys-411 each coordinate phosphoenolpyruvate.

The protein belongs to the EPSP synthase family. In terms of assembly, monomer.

It localises to the cytoplasm. The enzyme catalyses 3-phosphoshikimate + phosphoenolpyruvate = 5-O-(1-carboxyvinyl)-3-phosphoshikimate + phosphate. It functions in the pathway metabolic intermediate biosynthesis; chorismate biosynthesis; chorismate from D-erythrose 4-phosphate and phosphoenolpyruvate: step 6/7. In terms of biological role, catalyzes the transfer of the enolpyruvyl moiety of phosphoenolpyruvate (PEP) to the 5-hydroxyl of shikimate-3-phosphate (S3P) to produce enolpyruvyl shikimate-3-phosphate and inorganic phosphate. This Salmonella typhi protein is 3-phosphoshikimate 1-carboxyvinyltransferase.